A 377-amino-acid chain; its full sequence is Guanine nucleotide-binding protein subunit alpha-13 (377 aa).

S-palmitoyl cysteine attachment occurs at residues C14 and C18. In terms of domain architecture, G-alpha spans 47 to 377; sequence RLVKILLLGA…HDNLKQLMLQ (331 aa). Positions 50–63 are G1 motif; it reads KILLLGAGESGKST. GTP-binding positions include 58-63, S173, and 197-200; these read ESGKST and LLAR. Position 62 (S62) interacts with Mg(2+). The interval 195-203 is G2 motif; that stretch reads DILLARRPT. T203 is a Mg(2+) binding site. T203 carries the phosphothreonine; by PKA modification. Residues 218 to 227 form a G3 motif region; it reads FKMVDVGGQR. The tract at residues 287 to 294 is G4 motif; it reads ILFLNKTD. Residues 291–294 and A349 each bind GTP; that span reads NKTD. A G5 motif region spans residues 347–352; it reads TTAINT.

It belongs to the G-alpha family. G(12) subfamily. G proteins are composed of 3 units; alpha, beta and gamma. The alpha chain contains the guanine nucleotide binding site. Interacts with UBXD5. Interacts with HAX1. Interacts (in GTP-bound form) with PPP5C (via TPR repeats); activates PPP5C phosphatase activity and translocates PPP5C to the cell membrane. Interacts with RGS22. Interacts with ARHGEF1. Interacts (in GTP-bound form) with ARHGEF11 (via RGS domain). Interacts (in GTP-bound form) with ARHGEF12 (via RGS domain). Interacts (in GTP-bound form) with CTNND1. Interacts with GAS2L2. Interacts with GPR35. Interacts with GPR174. Post-translationally, palmitoylation is critical for proper membrane localization and signaling. Phosphorylation on Thr-203 by PKA destabilizes the heterotrimer of alpha, beta and gamma, and inhibits Rho activation.

It is found in the membrane. The protein resides in the melanosome. It localises to the cytoplasm. The protein localises to the nucleus. In terms of biological role, guanine nucleotide-binding proteins (G proteins) are involved as modulators or transducers in various transmembrane signaling systems. Activates effector molecule RhoA by binding and activating RhoGEFs (ARHGEF1/p115RhoGEF, ARHGEF11/PDZ-RhoGEF and ARHGEF12/LARG). GNA13-dependent Rho signaling subsequently regulates transcription factor AP-1 (activating protein-1). Promotes tumor cell invasion and metastasis by activating RhoA/ROCK signaling pathway. Inhibits CDH1-mediated cell adhesion in process independent from Rho activation. In lymphoid follicles, transmits P2RY8- and S1PR2-dependent signals that lead to inhibition of germinal center (GC) B cell growth and migration outside the GC niche. This Rattus norvegicus (Rat) protein is Guanine nucleotide-binding protein subunit alpha-13 (Gna13).